The chain runs to 362 residues: MASHKITLLTGDGIGPEISIVAKKILAALSEKHSITFTIEEKPFGGQAIELTGKPLPEDTLNSCKASDAVLLAAIGDPKYDDLPRDLRPETGLLNLRAGLNLFANIRPIKIRQALISSSSLKSEIIKDVDLVVVRELTGGIYFGQPKGRISTEEAGERAFNTMTYSDYEIDRIAKIAFDLSETRRKKICSIDKANVLEVSQLWRERVIKAQEQYPNIELTHQYVDNAAMQLVREPAQFDVILTSNLFGDIISDEAAMLTGSIGMLPSASLGEDGPGVFEPVHGSAPDIAHKNLANPIAMILSTAMMLRTGLMEYKAATDLENAIDKVLGKGFRTIDLNRDQSNTKLGCREMGDQIIKAINGI.

4 residues coordinate substrate: R97, R107, R135, and D225. Positions 225, 249, and 253 each coordinate Mg(2+). 283–295 (GSAPDIAHKNLAN) is a binding site for NAD(+).

Belongs to the isocitrate and isopropylmalate dehydrogenases family. LeuB type 1 subfamily. As to quaternary structure, homodimer. It depends on Mg(2+) as a cofactor. Mn(2+) is required as a cofactor.

Its subcellular location is the cytoplasm. The catalysed reaction is (2R,3S)-3-isopropylmalate + NAD(+) = 4-methyl-2-oxopentanoate + CO2 + NADH. The protein operates within amino-acid biosynthesis; L-leucine biosynthesis; L-leucine from 3-methyl-2-oxobutanoate: step 3/4. Functionally, catalyzes the oxidation of 3-carboxy-2-hydroxy-4-methylpentanoate (3-isopropylmalate) to 3-carboxy-4-methyl-2-oxopentanoate. The product decarboxylates to 4-methyl-2 oxopentanoate. This is 3-isopropylmalate dehydrogenase from Prochlorococcus marinus (strain SARG / CCMP1375 / SS120).